The sequence spans 166 residues: Interleukin-3 (166 aa).

A signal peptide spans 1 to 26 (MVLASSTTSIHTMLLLLLMLFHLGLQ). Asn42 carries an N-linked (GlcNAc...) asparagine glycan. 2 disulfides stabilise this stretch: Cys43–Cys106 and Cys105–Cys166. The N-linked (GlcNAc...) asparagine; partial glycan is linked to Asn112. Positions 145–166 (LTSRPPQPASGSVSPNRGTVEC) are disordered.

This sequence belongs to the IL-3 family. In terms of assembly, monomer. In terms of tissue distribution, activated T-cells, mast cells, natural killer cells.

It is found in the secreted. Cytokine secreted predominantly by activated T-lymphocytes as well as mast cells and osteoblastic cells that controls the production and differentiation of hematopoietic progenitor cells into lineage-restricted cells. Also stimulates mature basophils, eosinophils, and monocytes to become functionally activated. In addition, plays an important role in neural cell proliferation and survival. Participates as well in bone homeostasis and inhibits osteoclast differentiation by preventing NF-kappa-B nuclear translocation and activation. Mechanistically, exerts its biological effects through a receptor composed of IL3RA subunit and a signal transducing subunit IL3RB. Receptor stimulation results in the rapid activation of JAK2 kinase activity leading to STAT5-mediated transcriptional program. Alternatively, contributes to cell survival under oxidative stress in non-hematopoietic systems by activating pathways mediated by PI3K/AKT and ERK. The chain is Interleukin-3 (Il3) from Mus musculus (Mouse).